We begin with the raw amino-acid sequence, 393 residues long: tRNA(Met) cytidine acetate ligase (393 aa).

G81, N142, and R167 together coordinate ATP.

The protein belongs to the TmcAL family.

It is found in the cytoplasm. The enzyme catalyses cytidine(34) in elongator tRNA(Met) + acetate + ATP = N(4)-acetylcytidine(34) in elongator tRNA(Met) + AMP + diphosphate. Catalyzes the formation of N(4)-acetylcytidine (ac(4)C) at the wobble position of elongator tRNA(Met), using acetate and ATP as substrates. First activates an acetate ion to form acetyladenylate (Ac-AMP) and then transfers the acetyl group to tRNA to form ac(4)C34. The chain is tRNA(Met) cytidine acetate ligase from Bacillus cereus (strain AH187).